The chain runs to 321 residues: Phospho-N-acetylmuramoyl-pentapeptide-transferase (321 aa).

10 helical membrane-spanning segments follow: residues 1-21 (MIFV…PVLI), 50-70 (MGGL…IIFV), 76-96 (IILL…DDYI), 112-132 (FLAQ…FHLV), 140-160 (IPFT…IVFL), 176-196 (GLAT…SFVL), 200-220 (AIGI…PYNI), 225-245 (VFMG…ISIM), 250-270 (LSLI…MLQV), and 300-320 (VVTV…WIGV).

It belongs to the glycosyltransferase 4 family. MraY subfamily. Mg(2+) serves as cofactor.

It localises to the cell membrane. The enzyme catalyses UDP-N-acetyl-alpha-D-muramoyl-L-alanyl-gamma-D-glutamyl-L-lysyl-D-alanyl-D-alanine + di-trans,octa-cis-undecaprenyl phosphate = Mur2Ac(oyl-L-Ala-gamma-D-Glu-L-Lys-D-Ala-D-Ala)-di-trans,octa-cis-undecaprenyl diphosphate + UMP. Its pathway is cell wall biogenesis; peptidoglycan biosynthesis. In terms of biological role, catalyzes the initial step of the lipid cycle reactions in the biosynthesis of the cell wall peptidoglycan: transfers peptidoglycan precursor phospho-MurNAc-pentapeptide from UDP-MurNAc-pentapeptide onto the lipid carrier undecaprenyl phosphate, yielding undecaprenyl-pyrophosphoryl-MurNAc-pentapeptide, known as lipid I. This chain is Phospho-N-acetylmuramoyl-pentapeptide-transferase, found in Staphylococcus aureus (strain bovine RF122 / ET3-1).